Consider the following 311-residue polypeptide: Transcription factor bHLH145 (311 aa).

The region spanning 253–302 (FLKRSKLSSNKIGEEKIFETVSLLRSVVPGEELVDPILVIDRAIDYLKSL) is the bHLH domain.

Homodimer.

Its subcellular location is the nucleus. This Arabidopsis thaliana (Mouse-ear cress) protein is Transcription factor bHLH145 (BHLH145).